The following is a 502-amino-acid chain: Vicilin Jug r 6.0101 (502 aa).

Residues 1 to 27 form the signal peptide; that stretch reads MAFKPKIPIALLLLTSLLAICAGLALA. Residues 67–84 are compositionally biased toward basic and acidic residues; the sequence is ARERAERRRSEEGSSREE. The tract at residues 67–100 is disordered; that stretch reads ARERAERRRSEEGSSREEGYEEEELGGEREEENP. Residues 85 to 100 are compositionally biased toward acidic residues; that stretch reads GYEEEELGGEREEENP. Cupin type-1 domains lie at 101 to 259 and 302 to 475; these read YVFE…DQLE and FNLF…REVE. The N-linked (GlcNAc...) asparagine glycan is linked to Asn-340. The interval 374–401 is disordered; it reads HLSSSGSRGQREGSGSSRRRSRSGPSYQ. A compositionally biased stretch (low complexity) spans 376 to 389; sequence SSSGSRGQREGSGS.

This sequence belongs to the 7S seed storage protein family. In terms of assembly, homotrimer. In terms of processing, N-glycosylated; paucimannose-type structures containing xylose. In terms of tissue distribution, expressed in seed (at protein level).

Functionally, seed storage protein. The polypeptide is Vicilin Jug r 6.0101 (Juglans regia (English walnut)).